Reading from the N-terminus, the 26-residue chain is Glycyl-poneratoxin (26 aa).

R25 is subject to Arginine amide; in delta-paraponeritoxin-Pc1a.

In terms of processing, the glycine-PoTx is a non-amidated form of poneratoxin, with an extra-Gly at C-terminus. This loss of amidation does not alter toxin activity on Nav1.7/SCN9A. As to expression, expressed by the venom gland.

The protein resides in the secreted. Functionally, toxin that causes pain in vertebrates by targeting tetrodotoxin (TTX)-sensitive sodium channels in peripheral sensory neurons. Also blocks synaptic transmission and stimulates smooth muscle contraction. Converts the normally rapidly activating and inactivating sodium channel current into one that does not inactivate. Is active on both Nav1.6/SCN8A and Nav1.7/SCN9A sodium channels, with a much potent activity on Nav1.6/SCN8A (EC(50)=97 nM on human channels) than on Nav1.7/SCN9A (EC(50)=2.3 uM on human and EC(50)=1.8 uM on mouse channels). On these channels, causes a sustained current, a reduction in peak current amplitude and a hyperpolarising shift. Modulates Nav1.7/SCN9A in a non-competitive manner with TTX or tetracaine. Toxin-induced persistant current is very slowly reversible with repeated wash steps over 30 minutes. In vivo, shallow intraplantar injection in mice causes immediate, long-lasting and near-maximal nocifensive behaviors, which decrease with coinjection of TTX. When tested on insects, causes paralysis but not mortality at high doses. The polypeptide is Glycyl-poneratoxin (Paraponera clavata (Bullet ant)).